Here is a 262-residue protein sequence, read N- to C-terminus: DNA-directed RNA polymerase subunit Rpo3 (262 aa).

The protein belongs to the archaeal Rpo3/eukaryotic RPB3 RNA polymerase subunit family. As to quaternary structure, part of the RNA polymerase complex.

It localises to the cytoplasm. It carries out the reaction RNA(n) + a ribonucleoside 5'-triphosphate = RNA(n+1) + diphosphate. Its function is as follows. DNA-dependent RNA polymerase (RNAP) catalyzes the transcription of DNA into RNA using the four ribonucleoside triphosphates as substrates. The polypeptide is DNA-directed RNA polymerase subunit Rpo3 (Pyrobaculum islandicum (strain DSM 4184 / JCM 9189 / GEO3)).